Reading from the N-terminus, the 357-residue chain is MDLNEESAPSGVLFEEDVAEQEAKMANGGPKKGKKLEEPYRLEIVWFNVLWFVLLHAGALYGVYLIFASAKIYTTLYGFLLCELSLLSITAGVHRLWAHRAYKAKWPLRLTLMVLNLLAYQNSIYEWARDHRVHHKFSETNADPVNAKRGFFFSHVGWLLCRKHPEVRAKGGRIDLSDLERDPIVMFQKRHYYKLVPFVSFVIPTLIPMYFWGETLSNSWYVSTMFRYCLSLNLTWLVNSAAHMWGNKPYDKNINPVENLAVAIGSLGEGWHNFHHVFPWDYKTSELGNYSLNFTNAFIDLAVLLGLAYDLKTVPVSMIKTRVGRTGDGSHDVWGWGDKDLPKELADQTMIENRKTE.

A run of 2 helical transmembrane segments spans residues 49-69 (VLWFVLLHAGALYGVYLIFAS) and 72-92 (IYTTLYGFLLCELSLLSITAG). Residues His-94, His-99, His-131, His-134, and His-135 each contribute to the Fe cation site. Residues 94-99 (HRLWAH) carry the Histidine box-1 motif. The Histidine box-2 signature appears at 131-135 (HRVHH). Transmembrane regions (helical) follow at residues 195–215 (LVPFVSFVIPTLIPMYFWGET) and 223–245 (STMFRYCLSLNLTWLVNSAAHMW). The Fe cation site is built by His-243, His-272, His-275, and His-276. The Histidine box-3 motif lies at 272–276 (HNFHH).

It belongs to the fatty acid desaturase type 1 family. It depends on Fe(2+) as a cofactor.

It localises to the membrane. The enzyme catalyses (9Z)-octadecenoyl-CoA + 2 Fe(II)-[cytochrome b5] + O2 + 2 H(+) = (9Z,12Z)-octadecadienoyl-CoA + 2 Fe(III)-[cytochrome b5] + 2 H2O. It carries out the reaction (9Z)-hexadecenoyl-CoA + 2 Fe(II)-[cytochrome b5] + O2 + 2 H(+) = (9Z,12Z)-hexadecadienoyl-CoA + 2 Fe(III)-[cytochrome b5] + 2 H2O. It catalyses the reaction hexadecanoyl-CoA + 2 Fe(II)-[cytochrome b5] + O2 + 2 H(+) = (9Z)-hexadecenoyl-CoA + 2 Fe(III)-[cytochrome b5] + 2 H2O. In terms of biological role, catalyzes the formation of a Delta12 double bond, acting on monounsaturated fatty acyl substrates like palmitoleoyl-CoA ((9Z)-hexadecenoyl-CoA) and oleoyl-CoA ((9Z)-octadecenoyl-CoA) with higher desaturation activity on (9Z)-octadecenoyl-CoA than (9Z)-hexadecenoyl-CoA. Requires preexisting cis double bond at the Delta9 position of fatty acyls to be able to insert the Delta12 double bond. Delta12-desaturation of (9Z)-octadecenoyl-CoA in insects produces (9Z,12Z)-octadecadienoyl-CoA (linoleoyl-CoA) which may be used to supply precursors of crucial mediators of immunity and reproduction and other essential functions. Can also catalyze Delta9-desaturation on saturated fatty acyl substrates like palmitoyl-CoA (hexadecanoyl-CoA) but with lower efficiency. This chain is Acyl-CoA Delta12-desaturase, found in Acheta domesticus (House cricket).